We begin with the raw amino-acid sequence, 1150 residues long: PAN2-PAN3 deadenylation complex catalytic subunit pan2 (1150 aa).

2 WD repeats span residues 96-139 and 270-309; these read AHEE…DKLH and ANVSFMLGIDLSPSGEALAINDAECAIHLWGSPAKVHFNE. The segment at 310-446 is linker; that stretch reads MSKEAEFGDV…GAKINGETDD (137 aa). Residues 447–816 form the USP domain; it reads DPLLKYSNVE…IPCVLAYQVQ (370 aa). The region spanning 865–1043 is the Exonuclease domain; sequence VALDTEFVDL…IEDARMALRL (179 aa). A divalent metal cation contacts are provided by Asp-868, Glu-870, Asp-977, and Asp-1036. The interval 1074-1150 is disordered; the sequence is PPPRNGVPTV…GDFFSGSPLK (77 aa). Polar residues predominate over residues 1091–1106; that stretch reads VTMQNNSGRNTPSTSD. Over residues 1108 to 1120 the composition is skewed to low complexity; it reads AGAAASAPATPRQ.

This sequence belongs to the peptidase C19 family. PAN2 subfamily. As to quaternary structure, forms a heterotrimer with an asymmetric homodimer of the regulatory subunit pan3 to form the poly(A)-nuclease (PAN) deadenylation complex. The cofactor is a divalent metal cation.

The protein localises to the cytoplasm. It catalyses the reaction Exonucleolytic cleavage of poly(A) to 5'-AMP.. Its activity is regulated as follows. Positively regulated by the regulatory subunit pan3. Catalytic subunit of the poly(A)-nuclease (PAN) deadenylation complex, one of two cytoplasmic mRNA deadenylases involved in mRNA turnover. PAN specifically shortens poly(A) tails of RNA and the activity is stimulated by poly(A)-binding protein pab1. PAN deadenylation is followed by rapid degradation of the shortened mRNA tails by the CCR4-NOT complex. Deadenylated mRNAs are then degraded by two alternative mechanisms, namely exosome-mediated 3'-5' exonucleolytic degradation, or deadenylation-dependent mRNA decaping and subsequent 5'-3' exonucleolytic degradation by xrn1. May also be involved in post-transcriptional maturation of mRNA poly(A) tails. This chain is PAN2-PAN3 deadenylation complex catalytic subunit pan2, found in Aspergillus niger (strain ATCC MYA-4892 / CBS 513.88 / FGSC A1513).